The sequence spans 296 residues: Acetaldehyde dehydrogenase (296 aa).

15 to 18 contributes to the NAD(+) binding site; sequence SGNI. C132 serves as the catalytic Acyl-thioester intermediate. Residues 164–172 and N274 each bind NAD(+); that span reads SAGPATRAN.

Belongs to the acetaldehyde dehydrogenase family. In terms of assembly, interacts with MhpE.

It catalyses the reaction acetaldehyde + NAD(+) + CoA = acetyl-CoA + NADH + H(+). It participates in aromatic compound metabolism; 3-phenylpropanoate degradation. Its function is as follows. Catalyzes the conversion of acetaldehyde to acetyl-CoA, using NAD(+) and coenzyme A. Is the final enzyme in the meta-cleavage pathway for the degradation of aromatic compounds. This is Acetaldehyde dehydrogenase from Pectobacterium atrosepticum (strain SCRI 1043 / ATCC BAA-672) (Erwinia carotovora subsp. atroseptica).